The following is a 204-amino-acid chain: Thiamine-phosphate synthase (204 aa).

4-amino-2-methyl-5-(diphosphooxymethyl)pyrimidine-binding positions include 35–39 and N67; that span reads QVREK. Positions 68 and 87 each coordinate Mg(2+). S106 contacts 4-amino-2-methyl-5-(diphosphooxymethyl)pyrimidine. 132–134 contributes to the 2-[(2R,5Z)-2-carboxy-4-methylthiazol-5(2H)-ylidene]ethyl phosphate binding site; that stretch reads TPT. K135 is a binding site for 4-amino-2-methyl-5-(diphosphooxymethyl)pyrimidine. Residues G163 and 183-184 contribute to the 2-[(2R,5Z)-2-carboxy-4-methylthiazol-5(2H)-ylidene]ethyl phosphate site; that span reads VS.

It belongs to the thiamine-phosphate synthase family. The cofactor is Mg(2+).

The enzyme catalyses 2-[(2R,5Z)-2-carboxy-4-methylthiazol-5(2H)-ylidene]ethyl phosphate + 4-amino-2-methyl-5-(diphosphooxymethyl)pyrimidine + 2 H(+) = thiamine phosphate + CO2 + diphosphate. It catalyses the reaction 2-(2-carboxy-4-methylthiazol-5-yl)ethyl phosphate + 4-amino-2-methyl-5-(diphosphooxymethyl)pyrimidine + 2 H(+) = thiamine phosphate + CO2 + diphosphate. The catalysed reaction is 4-methyl-5-(2-phosphooxyethyl)-thiazole + 4-amino-2-methyl-5-(diphosphooxymethyl)pyrimidine + H(+) = thiamine phosphate + diphosphate. It functions in the pathway cofactor biosynthesis; thiamine diphosphate biosynthesis; thiamine phosphate from 4-amino-2-methyl-5-diphosphomethylpyrimidine and 4-methyl-5-(2-phosphoethyl)-thiazole: step 1/1. Functionally, condenses 4-methyl-5-(beta-hydroxyethyl)thiazole monophosphate (THZ-P) and 2-methyl-4-amino-5-hydroxymethyl pyrimidine pyrophosphate (HMP-PP) to form thiamine monophosphate (TMP). The protein is Thiamine-phosphate synthase of Vibrio campbellii (strain ATCC BAA-1116).